The sequence spans 327 residues: Quinone oxidoreductase 1 (327 aa).

NADP(+)-binding positions include 42–46 (FIDTY), Y130, 152–153 (GV), 173–177 (GTAQK), Y192, S216, 238–241 (FGNS), 264–266 (PSL), and R317.

It belongs to the zinc-containing alcohol dehydrogenase family. Quinone oxidoreductase subfamily. Homodimer.

It catalyses the reaction 2 a quinone + NADPH + H(+) = 2 a 1,4-benzosemiquinone + NADP(+). This Escherichia coli (strain K12) protein is Quinone oxidoreductase 1 (qorA).